A 505-amino-acid polypeptide reads, in one-letter code: Alpha-internexin (505 aa).

The tract at residues 1–87 is head; that stretch reads MSFGSEHYLC…SQAAARTNEY (87 aa). Position 72 is a phosphoserine (serine 72). The coil 1A stretch occupies residues 88 to 129; that stretch reads KIIRTNEKEQLQGLNDRFAVFIEKVHQLETQNRALEAELAAL. In terms of domain architecture, IF rod spans 94 to 407; sequence EKEQLQGLND…KLLEGEETRF (314 aa). The interval 130–142 is linker 1; that stretch reads RQRHAEPSRVGEL. The tract at residues 143–238 is coil 1B; that stretch reads FQRELRELRA…QVHDEEVAEL (96 aa). A Phosphoserine modification is found at serine 219. Positions 239–262 are linker 2; the sequence is LATLQASSQAAAEVDVAVAKPDLT. Residues 263-408 form a coil 2 region; sequence SALREIRAQY…LLEGEETRFS (146 aa). N6-acetyllysine is present on lysine 290. 3 positions are modified to phosphoserine: serine 335, serine 474, and serine 502. A tail region spans residues 409 to 505; sequence TSGLSISGLN…EITTSSSQKM (97 aa). A disordered region spans residues 438 to 505; sequence KVSSAGLSLK…EITTSSSQKM (68 aa). The span at 495–505 shows a compositional bias: low complexity; it reads EEITTSSSQKM.

The protein belongs to the intermediate filament family. Forms homodimers (in vitro). Forms heterodimers with NEFL, NEFM or NEFH (in vitro). Post-translationally, O-glycosylated. Expressed in the dorsal root ganglion neurons (at protein level).

Functionally, class-IV neuronal intermediate filament that is able to self-assemble. It is involved in the morphogenesis of neurons. It may form an independent structural network without the involvement of other neurofilaments or it may cooperate with NEFL to form the filamentous backbone to which NEFM and NEFH attach to form the cross-bridges. May also cooperate with the neuronal intermediate filament protein PRPH to form filamentous networks. This is Alpha-internexin (Ina) from Rattus norvegicus (Rat).